The following is a 134-amino-acid chain: Small ribosomal subunit protein uS9 (134 aa).

Residues 114-134 are disordered; that stretch reads EVERKKYGLKKARRAPQFSKR. A compositionally biased stretch (basic residues) spans 120–134; that stretch reads YGLKKARRAPQFSKR.

The protein belongs to the universal ribosomal protein uS9 family.

The chain is Small ribosomal subunit protein uS9 from Thermotoga neapolitana (strain ATCC 49049 / DSM 4359 / NBRC 107923 / NS-E).